The chain runs to 595 residues: Adenine deaminase (595 aa).

The protein belongs to the metallo-dependent hydrolases superfamily. Adenine deaminase family. In terms of assembly, homodimer. Requires Mn(2+) as cofactor.

The catalysed reaction is adenine + H2O + H(+) = hypoxanthine + NH4(+). The sequence is that of Adenine deaminase from Serratia proteamaculans (strain 568).